A 689-amino-acid chain; its full sequence is Glycine--tRNA ligase beta subunit (689 aa).

It belongs to the class-II aminoacyl-tRNA synthetase family. Tetramer of two alpha and two beta subunits.

Its subcellular location is the cytoplasm. It catalyses the reaction tRNA(Gly) + glycine + ATP = glycyl-tRNA(Gly) + AMP + diphosphate. The polypeptide is Glycine--tRNA ligase beta subunit (Shigella boydii serotype 18 (strain CDC 3083-94 / BS512)).